The chain runs to 165 residues: Shikimate kinase (165 aa).

11 to 16 (GAGKTT) contributes to the ATP binding site. Threonine 15 is a Mg(2+) binding site. Positions 33, 57, and 78 each coordinate substrate. Residue arginine 116 participates in ATP binding. Residue arginine 134 participates in substrate binding.

The protein belongs to the shikimate kinase family. In terms of assembly, monomer. Mg(2+) serves as cofactor.

The protein resides in the cytoplasm. The catalysed reaction is shikimate + ATP = 3-phosphoshikimate + ADP + H(+). It functions in the pathway metabolic intermediate biosynthesis; chorismate biosynthesis; chorismate from D-erythrose 4-phosphate and phosphoenolpyruvate: step 5/7. In terms of biological role, catalyzes the specific phosphorylation of the 3-hydroxyl group of shikimic acid using ATP as a cosubstrate. The protein is Shikimate kinase of Bacillus anthracis (strain A0248).